The primary structure comprises 507 residues: Cytochrome P450 7B1 (507 aa).

The next 3 helical transmembrane spans lie at 14-34 (PLALLGLLFAATLLLSALFLL), 178-198 (IFAFCGSLVFEITFATLYGKI), and 287-307 (FLWASLANTIPAMFWAMYYIL). Cysteine 447 is a heme binding site.

The protein belongs to the cytochrome P450 family. Heme is required as a cofactor. As to expression, highly expressed in brain structures including the corpus callosum, the anterior commissure and fornix. The hippocampal expression is particularly prominent in the dentate gyrus. Expressed in liver and kidney. The hepatic expression is sexually dimorphic, predominantly detected in male liver while barely detectable in females. Expressed in lymph nodes and spleens, in both lymphoid and stromal compartments. Higher expression is detected in fibroblastic reticular cells, a type of stromal cells in the lymph nodes. Also expressed at high levels in the outer follicle and at the B cell-T cell boundary of splenic germinal centers. Expressed in dendritic cells (DCs) subpopulations being most abundant in CD8-positive DCs.

It is found in the endoplasmic reticulum membrane. It localises to the microsome membrane. It carries out the reaction 25-hydroxycholesterol + reduced [NADPH--hemoprotein reductase] + O2 = 7alpha,25-dihydroxycholesterol + oxidized [NADPH--hemoprotein reductase] + H2O + H(+). The enzyme catalyses (25R)-cholest-5-ene-3beta,26-diol + reduced [NADPH--hemoprotein reductase] + O2 = (25R)-cholest-5-en-3beta,7alpha,26-triol + oxidized [NADPH--hemoprotein reductase] + H2O + H(+). The catalysed reaction is (24S)-hydroxycholesterol + reduced [NADPH--hemoprotein reductase] + O2 = (24S)-7alpha-dihydroxycholesterol + oxidized [NADPH--hemoprotein reductase] + H2O + H(+). It catalyses the reaction (24S)-25-epoxycholesterol + reduced [NADPH--hemoprotein reductase] + O2 = (24S,25)-epoxy-7alpha-hydroxycholesterol + oxidized [NADPH--hemoprotein reductase] + H2O + H(+). It carries out the reaction (22R)-hydroxycholesterol + reduced [NADPH--hemoprotein reductase] + O2 = (22R,7alpha)-dihydroxycholesterol + oxidized [NADPH--hemoprotein reductase] + H2O + H(+). The enzyme catalyses androst-5-en-3beta,17beta-diol + reduced [NADPH--hemoprotein reductase] + O2 = androst-5-en-3beta,7alpha,17beta-triol + oxidized [NADPH--hemoprotein reductase] + H2O + H(+). The catalysed reaction is 5alpha-androstane-3beta,17beta-diol + reduced [NADPH--hemoprotein reductase] + O2 = 5alpha-androstane-3beta,6alpha,17beta-triol + oxidized [NADPH--hemoprotein reductase] + H2O + H(+). It catalyses the reaction 3beta-hydroxyandrost-5-en-17-one + reduced [NADPH--hemoprotein reductase] + O2 = 3beta,7alpha-dihydroxyandrost-5-en-17-one + oxidized [NADPH--hemoprotein reductase] + H2O + H(+). It carries out the reaction 3beta-hydroxy-5alpha-androstan-17-one + reduced [NADPH--hemoprotein reductase] + O2 = 3beta,7alpha-dihydroxy-5alpha-androstan-17-one + oxidized [NADPH--hemoprotein reductase] + H2O + H(+). The enzyme catalyses pregnenolone + reduced [NADPH--hemoprotein reductase] + O2 = 7alpha-hydroxypregnenolone + oxidized [NADPH--hemoprotein reductase] + H2O + H(+). The protein operates within lipid metabolism; bile acid biosynthesis. Its pathway is steroid hormone biosynthesis. Inhibited by drugs voriconazole and metyrapone. A cytochrome P450 monooxygenase involved in the metabolism of endogenous oxysterols and steroid hormones, including neurosteroids. Mechanistically, uses molecular oxygen inserting one oxygen atom into a substrate, and reducing the second into a water molecule, with two electrons provided by NADPH via cytochrome P450 reductase (CPR; NADPH-ferrihemoprotein reductase). Catalyzes the hydroxylation of carbon hydrogen bonds of steroids with a preference for 7-alpha position. Usually metabolizes steroids carrying a hydroxy group at position 3, functioning as a 3-hydroxy steroid 7-alpha hydroxylase. Hydroxylates oxysterols, including 25-hydroxycholesterol and (25R)-cholest-5-ene-3beta,26-diol toward 7-alpha hydroxy derivatives, which may be transported to the liver and converted to bile acids. Via its product 7-alpha,25-dihydroxycholesterol, a ligand for the chemotactic G protein-coupled receptor GPR183/EBI2, regulates B cell migration in germinal centers of lymphoid organs, thus guiding efficient maturation of plasma B cells and overall antigen-specific humoral immune response. 7-alpha hydroxylates neurosteroids, including 3beta-hydroxyandrost-5-en-17-one (dehydroepiandrosterone) and pregnenolone, both involved in hippocampus-associated memory and learning. Metabolizes androstanoids toward 6- or 7-alpha hydroxy derivatives. In Mus musculus (Mouse), this protein is Cytochrome P450 7B1.